The sequence spans 83 residues: Cytochrome b559 subunit alpha (83 aa).

A helical transmembrane segment spans residues 21–35; it reads VIHSITIPSLFIAGW. Histidine 23 lines the heme pocket.

It belongs to the PsbE/PsbF family. Heterodimer of an alpha subunit and a beta subunit. PSII is composed of 1 copy each of membrane proteins PsbA, PsbB, PsbC, PsbD, PsbE, PsbF, PsbH, PsbI, PsbJ, PsbK, PsbL, PsbM, PsbT, PsbX, PsbY, PsbZ, Psb30/Ycf12, at least 3 peripheral proteins of the oxygen-evolving complex and a large number of cofactors. It forms dimeric complexes. Heme b is required as a cofactor.

The protein localises to the plastid. It is found in the chloroplast thylakoid membrane. Functionally, this b-type cytochrome is tightly associated with the reaction center of photosystem II (PSII). PSII is a light-driven water:plastoquinone oxidoreductase that uses light energy to abstract electrons from H(2)O, generating O(2) and a proton gradient subsequently used for ATP formation. It consists of a core antenna complex that captures photons, and an electron transfer chain that converts photonic excitation into a charge separation. This is Cytochrome b559 subunit alpha from Marchantia polymorpha (Common liverwort).